Here is an 821-residue protein sequence, read N- to C-terminus: Protein EFR3 homolog A (821 aa).

Phosphoserine is present on residues Ser-360, Ser-363, Ser-422, and Ser-694.

Belongs to the EFR3 family. In terms of assembly, component of a phosphatidylinositol 4-kinase (PI4K) complex, composed of PI4KA, EFR3 (EFR3A or EFR3B), TTC7 (TTC7A or TTC7B) and HYCC (HYCC1 or HYCC2). In terms of processing, palmitoylated at its N-terminus, anchoring the protein to the plasma membrane.

Its subcellular location is the cell membrane. It localises to the cytoplasm. The protein resides in the cytosol. Its function is as follows. Component of a complex required to localize phosphatidylinositol 4-kinase (PI4K) to the plasma membrane. The complex acts as a regulator of phosphatidylinositol 4-phosphate (PtdIns(4)P) synthesis. In the complex, EFR3A probably acts as the membrane-anchoring component. Also involved in responsiveness to G-protein-coupled receptors; it is however unclear whether this role is direct or indirect. The sequence is that of Protein EFR3 homolog A from Homo sapiens (Human).